Consider the following 301-residue polypeptide: Probable alpha-L-glutamate ligase (301 aa).

Residues 104–287 form the ATP-grasp domain; it reads LQLLSRKGIG…VAGIIIEYLE (184 aa). Residues Lys141, 178 to 179, Asp187, and 211 to 213 each bind ATP; these read EY and RSN. Asp248, Glu260, and Asn262 together coordinate Mg(2+). Residues Asp248, Glu260, and Asn262 each coordinate Mn(2+).

This sequence belongs to the RimK family. Mg(2+) serves as cofactor. It depends on Mn(2+) as a cofactor.

The polypeptide is Probable alpha-L-glutamate ligase (Azotobacter vinelandii (strain DJ / ATCC BAA-1303)).